The chain runs to 222 residues: Thiol:disulfide interchange protein DsbL (222 aa).

The first 27 residues, 1–27, serve as a signal peptide directing secretion; sequence MSAKWINSIFKSVVLTAALALPFTASA. One can recognise a Thioredoxin domain in the interval 28 to 221; the sequence is FTEGTDYMVL…MAQLVRELAT (194 aa). Cysteine 56 and cysteine 59 are joined by a disulfide.

It belongs to the thioredoxin family. DsbL subfamily. As to quaternary structure, interacts with DsbI.

The protein localises to the periplasm. Functionally, involved in disulfide-bond formation. Acts by transferring its disulfide bond to other proteins. Part of a redox system composed of DsbI and DsbL that mediates formation of an essential disulfide bond in AssT. The protein is Thiol:disulfide interchange protein DsbL of Lelliottia amnigena (Enterobacter amnigenus).